The chain runs to 261 residues: MTFLAKILEEKQTEVNSRKQEKIDFGSRNIPVHSFIQLINQASSLSIIAEIKRASPSKGEIQMDIDPVEQAIKYEQAGASAISVLTDQRFFKGSLNDLQQVSEAVSIPVLCKDFIIDEIQIDDAKDAGASIILLILAALPLERFQELYNYATKQGLEVICEVHTAEELKNALTISPAIIGINNRNLKSFDVDLQTTKQLAQRVDTNKTIIISESGMRTASDATLAAESGAKAILVGETFMRSNQLETDFNNLRVPLVERSI.

Belongs to the TrpC family.

The enzyme catalyses 1-(2-carboxyphenylamino)-1-deoxy-D-ribulose 5-phosphate + H(+) = (1S,2R)-1-C-(indol-3-yl)glycerol 3-phosphate + CO2 + H2O. It functions in the pathway amino-acid biosynthesis; L-tryptophan biosynthesis; L-tryptophan from chorismate: step 4/5. The polypeptide is Indole-3-glycerol phosphate synthase (Oceanobacillus iheyensis (strain DSM 14371 / CIP 107618 / JCM 11309 / KCTC 3954 / HTE831)).